Consider the following 337-residue polypeptide: GTP 3',8-cyclase (337 aa).

The region spanning 17–243 (PFQRQYYYLR…HKSHTDGPAK (227 aa)) is the Radical SAM core domain. Residue Arg26 participates in GTP binding. Cys33 and Cys37 together coordinate [4Fe-4S] cluster. Tyr39 serves as a coordination point for S-adenosyl-L-methionine. Cys40 is a binding site for [4Fe-4S] cluster. Arg76 is a binding site for GTP. Gly80 lines the S-adenosyl-L-methionine pocket. Thr107 contributes to the GTP binding site. Ser131 contributes to the S-adenosyl-L-methionine binding site. Residue Lys168 participates in GTP binding. Met202 contributes to the S-adenosyl-L-methionine binding site. [4Fe-4S] cluster is bound by residues Cys265 and Cys268. 270-272 (RLR) is a GTP binding site. Cys282 contacts [4Fe-4S] cluster.

This sequence belongs to the radical SAM superfamily. MoaA family. Monomer and homodimer. The cofactor is [4Fe-4S] cluster.

The enzyme catalyses GTP + AH2 + S-adenosyl-L-methionine = (8S)-3',8-cyclo-7,8-dihydroguanosine 5'-triphosphate + 5'-deoxyadenosine + L-methionine + A + H(+). Its pathway is cofactor biosynthesis; molybdopterin biosynthesis. In terms of biological role, catalyzes the cyclization of GTP to (8S)-3',8-cyclo-7,8-dihydroguanosine 5'-triphosphate. This is GTP 3',8-cyclase from Haemophilus influenzae (strain ATCC 51907 / DSM 11121 / KW20 / Rd).